Here is a 363-residue protein sequence, read N- to C-terminus: Heat-inducible transcription repressor HrcA (363 aa).

This sequence belongs to the HrcA family.

Its function is as follows. Negative regulator of class I heat shock genes (grpE-dnaK-dnaJ and groELS operons). Prevents heat-shock induction of these operons. The chain is Heat-inducible transcription repressor HrcA from Rhizobium radiobacter (Agrobacterium tumefaciens).